Consider the following 384-residue polypeptide: tRNA(Met) cytidine acetate ligase (384 aa).

Residues 7 to 20 (VAEY…HEFL), Gly101, Asn153, and Arg178 contribute to the ATP site.

The protein belongs to the TmcAL family.

Its subcellular location is the cytoplasm. The enzyme catalyses cytidine(34) in elongator tRNA(Met) + acetate + ATP = N(4)-acetylcytidine(34) in elongator tRNA(Met) + AMP + diphosphate. In terms of biological role, catalyzes the formation of N(4)-acetylcytidine (ac(4)C) at the wobble position of elongator tRNA(Met), using acetate and ATP as substrates. First activates an acetate ion to form acetyladenylate (Ac-AMP) and then transfers the acetyl group to tRNA to form ac(4)C34. This chain is tRNA(Met) cytidine acetate ligase, found in Lactobacillus delbrueckii subsp. bulgaricus (strain ATCC BAA-365 / Lb-18).